Here is a 285-residue protein sequence, read N- to C-terminus: ATP synthase gamma chain (285 aa).

Belongs to the ATPase gamma chain family. As to quaternary structure, F-type ATPases have 2 components, CF(1) - the catalytic core - and CF(0) - the membrane proton channel. CF(1) has five subunits: alpha(3), beta(3), gamma(1), delta(1), epsilon(1). CF(0) has three main subunits: a, b and c.

It is found in the cell membrane. Functionally, produces ATP from ADP in the presence of a proton gradient across the membrane. The gamma chain is believed to be important in regulating ATPase activity and the flow of protons through the CF(0) complex. The polypeptide is ATP synthase gamma chain (Dehalococcoides mccartyi (strain ATCC BAA-2100 / JCM 16839 / KCTC 5957 / BAV1)).